A 785-amino-acid polypeptide reads, in one-letter code: Phenylalanine--tRNA ligase beta subunit (785 aa).

The tRNA-binding domain maps to R39–G150. The B5 domain occupies R400–P476. Residues D454, D460, E463, and E464 each coordinate Mg(2+). Residues S692–R784 form the FDX-ACB domain.

The protein belongs to the phenylalanyl-tRNA synthetase beta subunit family. Type 1 subfamily. In terms of assembly, tetramer of two alpha and two beta subunits. Requires Mg(2+) as cofactor.

It localises to the cytoplasm. It catalyses the reaction tRNA(Phe) + L-phenylalanine + ATP = L-phenylalanyl-tRNA(Phe) + AMP + diphosphate + H(+). The chain is Phenylalanine--tRNA ligase beta subunit from Gloeobacter violaceus (strain ATCC 29082 / PCC 7421).